The following is a 380-amino-acid chain: Cytochrome b (380 aa).

A run of 4 helical transmembrane segments spans residues 34–54 (FGSL…LLAA), 78–99 (WLIR…YLHI), 114–134 (WNIG…GYVL), and 179–199 (FFAL…VHLT). 2 residues coordinate heme b: His-84 and His-98. The heme b site is built by His-183 and His-197. Position 202 (His-202) interacts with a ubiquinone. The next 4 helical transmembrane spans lie at 227–247 (IKDI…ALFS), 289–309 (LGGV…PLLH), 321–341 (LSQI…WVGS), and 348–368 (FIII…VLFP).

It belongs to the cytochrome b family. In terms of assembly, the cytochrome bc1 complex contains 11 subunits: 3 respiratory subunits (MT-CYB, CYC1 and UQCRFS1), 2 core proteins (UQCRC1 and UQCRC2) and 6 low-molecular weight proteins (UQCRH/QCR6, UQCRB/QCR7, UQCRQ/QCR8, UQCR10/QCR9, UQCR11/QCR10 and a cleavage product of UQCRFS1). This cytochrome bc1 complex then forms a dimer. It depends on heme b as a cofactor.

It is found in the mitochondrion inner membrane. Its function is as follows. Component of the ubiquinol-cytochrome c reductase complex (complex III or cytochrome b-c1 complex) that is part of the mitochondrial respiratory chain. The b-c1 complex mediates electron transfer from ubiquinol to cytochrome c. Contributes to the generation of a proton gradient across the mitochondrial membrane that is then used for ATP synthesis. The chain is Cytochrome b (MT-CYB) from Paradisaea rubra (Red bird of paradise).